A 75-amino-acid polypeptide reads, in one-letter code: Small ribosomal subunit protein bS18 (75 aa).

The protein belongs to the bacterial ribosomal protein bS18 family. As to quaternary structure, part of the 30S ribosomal subunit. Forms a tight heterodimer with protein bS6.

Functionally, binds as a heterodimer with protein bS6 to the central domain of the 16S rRNA, where it helps stabilize the platform of the 30S subunit. In Histophilus somni (strain 129Pt) (Haemophilus somnus), this protein is Small ribosomal subunit protein bS18.